A 670-amino-acid chain; its full sequence is Transketolase, plasmid (670 aa).

A substrate-binding site is contributed by His-32. Residues His-72 and 120–122 (GPL) contribute to the thiamine diphosphate site. Asp-161 contacts Mg(2+). Residues Gly-162 and Asn-191 each contribute to the thiamine diphosphate site. 2 residues coordinate Mg(2+): Asn-191 and Ile-193. Substrate-binding residues include His-267, Arg-364, and Ser-391. Residue His-267 participates in thiamine diphosphate binding. Glu-417 serves as the catalytic Proton donor. Residue Phe-443 coordinates thiamine diphosphate. Substrate contacts are provided by His-467, Asp-475, and Arg-526.

Belongs to the transketolase family. Homodimer. The cofactor is Mg(2+). It depends on Ca(2+) as a cofactor. Mn(2+) serves as cofactor. Requires Co(2+) as cofactor. Thiamine diphosphate is required as a cofactor.

It carries out the reaction D-sedoheptulose 7-phosphate + D-glyceraldehyde 3-phosphate = aldehydo-D-ribose 5-phosphate + D-xylulose 5-phosphate. Its pathway is carbohydrate biosynthesis; Calvin cycle. Catalyzes the transfer of a two-carbon ketol group from a ketose donor to an aldose acceptor, via a covalent intermediate with the cofactor thiamine pyrophosphate. The polypeptide is Transketolase, plasmid (cbbTP) (Cupriavidus necator (strain ATCC 17699 / DSM 428 / KCTC 22496 / NCIMB 10442 / H16 / Stanier 337) (Ralstonia eutropha)).